A 239-amino-acid polypeptide reads, in one-letter code: Protein-S-isoprenylcysteine O-methyltransferase (239 aa).

The Cytoplasmic portion of the chain corresponds to 1–23 (MHQDFQEDEHEYPDIRRNPLHEV). The chain crosses the membrane as a helical span at residues 24–44 (TMTSYILGILLGIFVGLFPQI). Residues 45–47 (RFK) lie on the Lumenal side of the membrane. A helical transmembrane segment spans residues 48–68 (NFNLFIIALSLFHFLEYYITA). The Cytoplasmic segment spans residues 69-88 (KYNPLKVHSESFLLNNGKSY). The helical transmembrane segment at 89-109 (MAAHSFAILECLVESFLFPDL) threads the bilayer. A topological domain (lumenal) is located at residue Lys-110. Residues 111–131 (IFSYSLATKLCTVLGCLLVIL) traverse the membrane as a helical segment. Topologically, residues 132 to 175 (GQYTRTIAMHTAGHSFSHIVKTKKESDHVLVKTGVYSWSRHPSY) are cytoplasmic. Residues 159–162 (HVLV), Tyr-167, and 172–175 (HPSY) contribute to the S-adenosyl-L-methionine site. An intramembrane region (helical) is located at residues 176–206 (LGFFWWAIGTQLLLLNPLSLVIFIFVLWKFF). Topologically, residues 207–239 (SDRIRVEEKYLIEFFSAEYIEYKNKVGVGIPFI) are cytoplasmic. Substrate is bound at residue Arg-209. Residue Glu-213 coordinates S-adenosyl-L-methionine.

Belongs to the class VI-like SAM-binding methyltransferase superfamily. Isoprenylcysteine carboxyl methyltransferase family.

It localises to the endoplasmic reticulum membrane. The catalysed reaction is [protein]-C-terminal S-[(2E,6E)-farnesyl]-L-cysteine + S-adenosyl-L-methionine = [protein]-C-terminal S-[(2E,6E)-farnesyl]-L-cysteine methyl ester + S-adenosyl-L-homocysteine. Mediates C-terminal methylation of the isoprenylated C-terminal cysteine in A-factor mating pheromone and Ras proteins. Does not have a preference for the farnesyl or geranylgeranyl moieties in the model substrates N-acetyl-S-farnesyl-L-cysteine (AFC) and N-acetyl-S-geranylgeranyl-L-cysteine (AGGC) in vitro. The sequence is that of Protein-S-isoprenylcysteine O-methyltransferase (STE14) from Saccharomyces cerevisiae (strain ATCC 204508 / S288c) (Baker's yeast).